The sequence spans 196 residues: ATP-dependent Clp protease proteolytic subunit (196 aa).

Catalysis depends on Ser101, which acts as the Nucleophile. His126 is an active-site residue.

It belongs to the peptidase S14 family. In terms of assembly, component of the chloroplastic Clp protease core complex.

The protein localises to the plastid. It localises to the chloroplast stroma. It carries out the reaction Hydrolysis of proteins to small peptides in the presence of ATP and magnesium. alpha-casein is the usual test substrate. In the absence of ATP, only oligopeptides shorter than five residues are hydrolyzed (such as succinyl-Leu-Tyr-|-NHMec, and Leu-Tyr-Leu-|-Tyr-Trp, in which cleavage of the -Tyr-|-Leu- and -Tyr-|-Trp bonds also occurs).. In terms of biological role, cleaves peptides in various proteins in a process that requires ATP hydrolysis. Has a chymotrypsin-like activity. Plays a major role in the degradation of misfolded proteins. This chain is ATP-dependent Clp protease proteolytic subunit, found in Coffea arabica (Arabian coffee).